The primary structure comprises 202 residues: Recombination protein RecR (202 aa).

The C4-type zinc finger occupies 57 to 72; sequence CRDCRTFTEDDICAVC. Residues 81-176 form the Toprim domain; the sequence is GQICVVESPA…PATRIAHGVP (96 aa).

This sequence belongs to the RecR family.

In terms of biological role, may play a role in DNA repair. It seems to be involved in an RecBC-independent recombinational process of DNA repair. It may act with RecF and RecO. The sequence is that of Recombination protein RecR from Photobacterium profundum (strain SS9).